A 115-amino-acid chain; its full sequence is UPF0102 protein NMA0341 (115 aa).

This sequence belongs to the UPF0102 family.

This Neisseria meningitidis serogroup A / serotype 4A (strain DSM 15465 / Z2491) protein is UPF0102 protein NMA0341.